Here is a 360-residue protein sequence, read N- to C-terminus: Peptide chain release factor 1 (360 aa).

Gln235 carries the post-translational modification N5-methylglutamine.

It belongs to the prokaryotic/mitochondrial release factor family. Post-translationally, methylated by PrmC. Methylation increases the termination efficiency of RF1.

Its subcellular location is the cytoplasm. Peptide chain release factor 1 directs the termination of translation in response to the peptide chain termination codons UAG and UAA. The protein is Peptide chain release factor 1 of Dechloromonas aromatica (strain RCB).